A 69-amino-acid chain; its full sequence is Light-harvesting protein B-870 beta chain (69 aa).

Positions 1–2 are excised as a propeptide; the sequence is MA. At 3-22 the chain is on the cytoplasmic side; that stretch reads EVKQESLSGITEGEAKEFHK. A bacteriochlorophyll-binding residues include H21 and H39. The chain crosses the membrane as a helical span at residues 23–45; sequence IFTSSILVFFGVAAFAHLLVWIW. The Periplasmic segment spans residues 46–56; that stretch reads RPWVPGPNGYS. Residues 57–69 constitute a propeptide that is removed on maturation; that stretch reads ALETLTQTLTYLS.

This sequence belongs to the antenna complex beta subunit family. As to quaternary structure, the core complex is formed by different alpha and beta chains, binding bacteriochlorophyll molecules, and arranged most probably in tetrameric structures disposed around the reaction center. The non-pigmented gamma chains may constitute additional components.

Its subcellular location is the cell inner membrane. Antenna complexes are light-harvesting systems, which transfer the excitation energy to the reaction centers. The sequence is that of Light-harvesting protein B-870 beta chain from Rhodospirillum rubrum (strain ATCC 11170 / ATH 1.1.1 / DSM 467 / LMG 4362 / NCIMB 8255 / S1).